The primary structure comprises 311 residues: R2-like ligand binding oxidase (311 aa).

Residues Glu68, Glu101, and His104 each coordinate Mn(2+). The 3-(O4'-tyrosyl)-valine (Val-Tyr) cross-link spans 71-162 (VTQDIQPFMA…AAQVRASVTY (92 aa)). Residue Glu101 coordinates Fe cation. Residues Glu167, Glu202, and His205 each coordinate Fe cation.

The protein belongs to the ribonucleoside diphosphate reductase small chain family. R2-like ligand binding oxidase subfamily. Homodimer. Fe cation serves as cofactor. The cofactor is Mn(2+).

Its function is as follows. Probable oxidase that might be involved in lipid metabolism. The protein is R2-like ligand binding oxidase of Mycobacterium avium (strain 104).